A 134-amino-acid polypeptide reads, in one-letter code: Large ribosomal subunit protein bL20 (134 aa).

The protein belongs to the bacterial ribosomal protein bL20 family.

Binds directly to 23S ribosomal RNA and is necessary for the in vitro assembly process of the 50S ribosomal subunit. It is not involved in the protein synthesizing functions of that subunit. This is Large ribosomal subunit protein bL20 from Rhizobium etli (strain CIAT 652).